The sequence spans 523 residues: Solute carrier family 2, facilitated glucose transporter member 2 (523 aa).

The Cytoplasmic segment spans residues 1–10 (MSEDKITGTL). The helical transmembrane segment at 11-31 (AFTVFTAVLSSFQFGYDIGVI) threads the bilayer. Residues 32–97 (NAPQEVIISH…SAHIVTMLWS (66 aa)) lie on the Extracellular side of the membrane. N62 is a glycosylation site (N-linked (GlcNAc...) asparagine). A helical transmembrane segment spans residues 98–118 (LSVSSFAVGGMVASFFGGWLG). The Cytoplasmic portion of the chain corresponds to 119–126 (DKLGRIKA). A helical transmembrane segment spans residues 127-147 (MLAANSLSLTGALLMGCSKFG). Residues 148–157 (PAHALIIAGR) are Extracellular-facing. A helical membrane pass occupies residues 158–178 (SVSGLYCGLISGLVPMYIGEI). The Cytoplasmic segment spans residues 179-186 (APTTLRGA). Residues 187–207 (LGTLHQLALVTGILISQIAGL) traverse the membrane as a helical segment. Residue Q192 coordinates D-glucose. Residues 208–216 (SFILGNQDH) lie on the Extracellular side of the membrane. A helical transmembrane segment spans residues 217-237 (WHILLGLSAVPALLQCLLLLF). Over 238–302 (CPESPRYLYI…LFTDANYRQP (65 aa)) the chain is Cytoplasmic. Residues 303–323 (ILVALMLHMAQQFSGINGIFY) traverse the membrane as a helical segment. Residues 313-314 (QQ) and N319 contribute to the D-glucose site. Residues 324-337 (YSTSIFQTAGISQP) are Extracellular-facing. Residues 338–358 (VYATIGVGAINMIFTAVSVLL) form a helical membrane-spanning segment. N348 provides a ligand contact to D-glucose. The Cytoplasmic portion of the chain corresponds to 359–367 (VEKAGRRTL). The helical transmembrane segment at 368–388 (FLTGMIGMFFCTIFMSVGLVL) threads the bilayer. Topologically, residues 389 to 401 (LDKFAWMSYVSMT) are extracellular. Residues 402 to 422 (AIFLFVSFFEIGPGPIPWFMV) traverse the membrane as a helical segment. Positions 411 and 419 each coordinate D-glucose. Topologically, residues 423–432 (AEFFSQGPRP) are cytoplasmic. The helical transmembrane segment at 433-453 (TALALAAFSNWVCNFVIALCF) threads the bilayer. The Extracellular segment spans residues 454-460 (QYIADFL). A helical transmembrane segment spans residues 461-481 (GPYVFFLFAGVVLVFTLFTFF). The Cytoplasmic portion of the chain corresponds to 482–523 (KVPETKGKSFEEIAAEFRKKSGSAPPRKAAVQMEFLASSESV). S522 carries the phosphoserine modification.

Belongs to the major facilitator superfamily. Sugar transporter (TC 2.A.1.1) family. Glucose transporter subfamily. N-glycosylated; required for stability and retention at the cell surface of pancreatic beta cells. In terms of tissue distribution, in embryo, expressed in endoderm layer of yolk sac and liver primordium.

Its subcellular location is the cell membrane. It catalyses the reaction D-glucose(out) = D-glucose(in). The enzyme catalyses D-fructose(out) = D-fructose(in). It carries out the reaction L-dehydroascorbate(out) = L-dehydroascorbate(in). The catalysed reaction is D-galactose(in) = D-galactose(out). With respect to regulation, D-glucose and maltose competitively inhibit fructose transport. D-glucose, D-fructose and maltose inhibit deoxyglucose transport. Functionally, facilitative hexose transporter that mediates the transport of glucose, fructose and galactose. Likely mediates the bidirectional transfer of glucose across the plasma membrane of hepatocytes and is responsible for uptake of glucose by the beta cells; may comprise part of the glucose-sensing mechanism of the beta cell. May also participate with the Na(+)/glucose cotransporter in the transcellular transport of glucose in the small intestine and kidney. Also able to mediate the transport of dehydroascorbate. The sequence is that of Solute carrier family 2, facilitated glucose transporter member 2 from Mus musculus (Mouse).